The sequence spans 1332 residues: Sister chromatid cohesion protein PDS5 homolog A (1332 aa).

The residue at position 1 (Met1) is an N-acetylmethionine. The HEAT repeat unit spans residues 392–428 (ALVNDQLLGFVRERTLDKRWRVRKEAMMGLAQLYKKY). Ser1096 is modified (phosphoserine). The segment at 1138-1332 (GVLGTVNKPL…PAERQIDLQR (195 aa)) is disordered. N6-acetyllysine is present on Lys1145. The span at 1160-1173 (GTETGSNINANSEL) shows a compositional bias: polar residues. Ser1174 and Ser1194 each carry phosphoserine. Thr1207 carries the phosphothreonine modification. Lys1210 carries the N6-acetyllysine modification. Polar residues predominate over residues 1222 to 1232 (SDQSTQGNISS). Lys1288 is subject to N6-acetyllysine. At Ser1303 the chain carries Phosphoserine. Basic and acidic residues predominate over residues 1316 to 1332 (DGAKKAVPAERQIDLQR).

The protein belongs to the PDS5 family. Interacts with the cohesin complex. Interacts with WAPL (via FGF motifs) or CDCA5 (via the FGF motif); the interaction is direct, cohesin-dependent and competitive. Interacts with SMC3. Interacts with TP63.

It localises to the nucleus. Functionally, probable regulator of sister chromatid cohesion in mitosis which may stabilize cohesin complex association with chromatin. May couple sister chromatid cohesion during mitosis to DNA replication. Cohesion ensures that chromosome partitioning is accurate in both meiotic and mitotic cells and plays an important role in DNA repair. This chain is Sister chromatid cohesion protein PDS5 homolog A (Pds5a), found in Mus musculus (Mouse).